A 373-amino-acid chain; its full sequence is Anhydro-N-acetylmuramic acid kinase (373 aa).

12–19 (GTSLDGVD) serves as a coordination point for ATP.

It belongs to the anhydro-N-acetylmuramic acid kinase family.

It carries out the reaction 1,6-anhydro-N-acetyl-beta-muramate + ATP + H2O = N-acetyl-D-muramate 6-phosphate + ADP + H(+). Its pathway is amino-sugar metabolism; 1,6-anhydro-N-acetylmuramate degradation. It participates in cell wall biogenesis; peptidoglycan recycling. Catalyzes the specific phosphorylation of 1,6-anhydro-N-acetylmuramic acid (anhMurNAc) with the simultaneous cleavage of the 1,6-anhydro ring, generating MurNAc-6-P. Is required for the utilization of anhMurNAc either imported from the medium or derived from its own cell wall murein, and thus plays a role in cell wall recycling. The sequence is that of Anhydro-N-acetylmuramic acid kinase from Serratia proteamaculans (strain 568).